Reading from the N-terminus, the 372-residue chain is MSNQHTLLMFNLLPVGLNISTWWNFGSMLLTCTALQTTTGFFLAIHYTANINLAFTSIVHITRDVPYGWIMQNIHATGASMFFICIYIHIARGLYYGSYLNKEVWVSGTTLLVTLMATAFFGYVLPWGQMSFWAATVITNLLTAVPYLGSTLTTWLWGGFSINDPTLTRFFALHFILPFIIISTSLIHVMLLHNEGSSNPLGTNSDIDKIPFHPYHTYKDTLMLTTLLTLLFITTSFFPNIFNDPENFSKANPLITPQHIKPEWYFLFAYGILRSIPNKLGGTMALVMSIIILLTAPFTHTSHVRSMTFRPMAQVLFWTFIATFMLITWAATKPVEPPFTTIGLSTSILYFSFFIINPLLGWSENKIMNTHN.

4 helical membrane passes run 25–45 (FGSM…FLAI), 69–90 (WIMQ…YIHI), 105–125 (WVSG…GYVL), and 170–190 (FFAL…IHVM). Heme b-binding residues include H75 and H89. The heme b site is built by H174 and H188. An a ubiquinone-binding site is contributed by H193. A run of 4 helical transmembrane segments spans residues 218–238 (YKDT…TSFF), 280–300 (LGGT…PFTH), 312–332 (MAQV…WAAT), and 339–358 (FTTI…IINP).

This sequence belongs to the cytochrome b family. In terms of assembly, the cytochrome bc1 complex contains 3 respiratory subunits (MT-CYB, CYC1 and UQCRFS1), 2 core proteins (UQCRC1 and UQCRC2) and probably 6 low-molecular weight proteins. Requires heme b as cofactor.

It is found in the mitochondrion inner membrane. In terms of biological role, component of the ubiquinol-cytochrome c reductase complex (complex III or cytochrome b-c1 complex) that is part of the mitochondrial respiratory chain. The b-c1 complex mediates electron transfer from ubiquinol to cytochrome c. Contributes to the generation of a proton gradient across the mitochondrial membrane that is then used for ATP synthesis. This chain is Cytochrome b (MT-CYB), found in Heterodon simus (Southern hognose snake).